A 2104-amino-acid polypeptide reads, in one-letter code: 5'-3' DNA helicase ZGRF1 (2104 aa).

Residues Ser335 to Gly345 show a composition bias toward polar residues. A disordered region spans residues Ser335 to Val359. Ser336 is subject to Phosphoserine. Residues Asp347 to Glu356 show a composition bias toward basic and acidic residues. A phosphoserine mark is found at Ser793 and Ser864. Residues Cys1349, His1351, Cys1374, and Cys1382 each contribute to the Zn(2+) site. The GRF-type zinc-finger motif lies at Cys1349–Val1391. Residues Val2085 to Ser2104 are disordered.

Interacts with DNA repair protein RAD51; the interaction promotes RAD51 strand exchange activity. Also interacts with DNA repair proteins EXO1 and BRCA1; the interactions are increased following DNA damage induction.

The protein localises to the nucleus. It catalyses the reaction ATP + H2O = ADP + phosphate + H(+). The catalysed reaction is Couples ATP hydrolysis with the unwinding of duplex DNA at the replication fork by translocating in the 5'-3' direction. This creates two antiparallel DNA single strands (ssDNA). The leading ssDNA polymer is the template for DNA polymerase III holoenzyme which synthesizes a continuous strand.. 5'-3' DNA helicase which is recruited to sites of DNA damage and promotes repair of replication-blocking DNA lesions through stimulation of homologous recombination (HR). Promotes HR by directly stimulating RAD51-mediated strand exchange activity. Not required to load RAD51 at sites of DNA damage but promotes recombinational repair after RAD51 recruitment. Also promotes HR by positively regulating EXO1-mediated DNA end resection of double-strand breaks. Required for recruitment of replication protein RPA2 to DNA damage sites. Promotes the initiation of the G2/M checkpoint but not its maintenance. Catalyzes Holliday junction branch migration and dissociation of D-loops and DNA flaps. The polypeptide is 5'-3' DNA helicase ZGRF1 (ZGRF1) (Homo sapiens (Human)).